The chain runs to 406 residues: 2,3-bisphosphoglycerate-independent phosphoglycerate mutase (406 aa).

This sequence belongs to the BPG-independent phosphoglycerate mutase family. A-PGAM subfamily.

The catalysed reaction is (2R)-2-phosphoglycerate = (2R)-3-phosphoglycerate. It participates in carbohydrate degradation; glycolysis; pyruvate from D-glyceraldehyde 3-phosphate: step 3/5. Functionally, catalyzes the interconversion of 2-phosphoglycerate and 3-phosphoglycerate. This Methanococcus maripaludis (strain DSM 14266 / JCM 13030 / NBRC 101832 / S2 / LL) protein is 2,3-bisphosphoglycerate-independent phosphoglycerate mutase.